The primary structure comprises 476 residues: Siroheme synthase (476 aa).

The interval 1-203 (MNYFPVFADL…RQIEAAKKEL (203 aa)) is precorrin-2 dehydrogenase /sirohydrochlorin ferrochelatase. Residues 22–23 (TI) and 43–44 (QK) each bind NAD(+). Serine 128 is subject to Phosphoserine. Residues 214-476 (GSVSLVGAGP…LDSLRIERVA (263 aa)) form a uroporphyrinogen-III C-methyltransferase region. Proline 223 lines the S-adenosyl-L-methionine pocket. Aspartate 246 acts as the Proton acceptor in catalysis. Catalysis depends on lysine 268, which acts as the Proton donor. Residues 299 to 301 (GGD), valine 304, 329 to 330 (TA), methionine 381, and glycine 410 contribute to the S-adenosyl-L-methionine site.

In the N-terminal section; belongs to the precorrin-2 dehydrogenase / sirohydrochlorin ferrochelatase family. The protein in the C-terminal section; belongs to the precorrin methyltransferase family.

It carries out the reaction uroporphyrinogen III + 2 S-adenosyl-L-methionine = precorrin-2 + 2 S-adenosyl-L-homocysteine + H(+). It catalyses the reaction precorrin-2 + NAD(+) = sirohydrochlorin + NADH + 2 H(+). The enzyme catalyses siroheme + 2 H(+) = sirohydrochlorin + Fe(2+). Its pathway is cofactor biosynthesis; adenosylcobalamin biosynthesis; precorrin-2 from uroporphyrinogen III: step 1/1. It participates in cofactor biosynthesis; adenosylcobalamin biosynthesis; sirohydrochlorin from precorrin-2: step 1/1. It functions in the pathway porphyrin-containing compound metabolism; siroheme biosynthesis; precorrin-2 from uroporphyrinogen III: step 1/1. The protein operates within porphyrin-containing compound metabolism; siroheme biosynthesis; siroheme from sirohydrochlorin: step 1/1. Its pathway is porphyrin-containing compound metabolism; siroheme biosynthesis; sirohydrochlorin from precorrin-2: step 1/1. In terms of biological role, multifunctional enzyme that catalyzes the SAM-dependent methylations of uroporphyrinogen III at position C-2 and C-7 to form precorrin-2 via precorrin-1. Then it catalyzes the NAD-dependent ring dehydrogenation of precorrin-2 to yield sirohydrochlorin. Finally, it catalyzes the ferrochelation of sirohydrochlorin to yield siroheme. This is Siroheme synthase from Mannheimia succiniciproducens (strain KCTC 0769BP / MBEL55E).